The following is a 216-amino-acid chain: Ribosomal RNA large subunit methyltransferase E (216 aa).

Residues glycine 60, tryptophan 62, aspartate 80, aspartate 96, and aspartate 121 each coordinate S-adenosyl-L-methionine. Lysine 161 acts as the Proton acceptor in catalysis.

Belongs to the class I-like SAM-binding methyltransferase superfamily. RNA methyltransferase RlmE family.

The protein localises to the cytoplasm. The enzyme catalyses uridine(2552) in 23S rRNA + S-adenosyl-L-methionine = 2'-O-methyluridine(2552) in 23S rRNA + S-adenosyl-L-homocysteine + H(+). Its function is as follows. Specifically methylates the uridine in position 2552 of 23S rRNA at the 2'-O position of the ribose in the fully assembled 50S ribosomal subunit. The polypeptide is Ribosomal RNA large subunit methyltransferase E (Pseudomonas syringae pv. syringae (strain B728a)).